The sequence spans 349 residues: Nicotinate-nucleotide--dimethylbenzimidazole phosphoribosyltransferase (349 aa).

Residue Glu313 is the Proton acceptor of the active site.

It belongs to the CobT family.

It carries out the reaction 5,6-dimethylbenzimidazole + nicotinate beta-D-ribonucleotide = alpha-ribazole 5'-phosphate + nicotinate + H(+). The protein operates within nucleoside biosynthesis; alpha-ribazole biosynthesis; alpha-ribazole from 5,6-dimethylbenzimidazole: step 1/2. In terms of biological role, catalyzes the synthesis of alpha-ribazole-5'-phosphate from nicotinate mononucleotide (NAMN) and 5,6-dimethylbenzimidazole (DMB). In Mycobacterium avium (strain 104), this protein is Nicotinate-nucleotide--dimethylbenzimidazole phosphoribosyltransferase.